Reading from the N-terminus, the 340-residue chain is MSSFNIHEILEQLYAAKSLTSEQSQAFFERVVQGQVDPIILSSVLTALKIKGETAQEITGAANALLAQATPFPRPDYDFTDIVGTGGDGLGTINISTASAFVAAACGLKVCKHGSRSVSSKSGSSDLLAAFGLNLDMSAQQARQCLDDLNICFLFAPQYHAGMRFAAPVRAALKTRSIFNVLGPLINPARPQFELMGVYAPELLKPIAEVHKELGMKRVMVVYGSGLDEIALHGETQVAELIDGKIIEYTLTPEDFGVQHYPVEAIIGGDPSENKIIIEQILQGKGSDAQQAAVAVNVSALLVLNGKADNFKEGTKQALAMMLTGKPLQLLKTLAERSQC.

Residues Gly84, 87–88 (GD), Thr92, 94–97 (NIST), 112–120 (KHGSRSVSS), and Ser124 contribute to the 5-phospho-alpha-D-ribose 1-diphosphate site. Residue Gly84 coordinates anthranilate. Ser96 serves as a coordination point for Mg(2+). Residue Arg170 coordinates anthranilate. Mg(2+) is bound by residues Asp228 and Glu229.

It belongs to the anthranilate phosphoribosyltransferase family. In terms of assembly, homodimer. Requires Mg(2+) as cofactor.

The enzyme catalyses N-(5-phospho-beta-D-ribosyl)anthranilate + diphosphate = 5-phospho-alpha-D-ribose 1-diphosphate + anthranilate. The protein operates within amino-acid biosynthesis; L-tryptophan biosynthesis; L-tryptophan from chorismate: step 2/5. Functionally, catalyzes the transfer of the phosphoribosyl group of 5-phosphorylribose-1-pyrophosphate (PRPP) to anthranilate to yield N-(5'-phosphoribosyl)-anthranilate (PRA). The polypeptide is Anthranilate phosphoribosyltransferase (Psychromonas ingrahamii (strain DSM 17664 / CCUG 51855 / 37)).